Reading from the N-terminus, the 347-residue chain is NADH-ubiquinone oxidoreductase chain 2 (347 aa).

11 helical membrane-spanning segments follow: residues 1-21, 25-45, 55-75, 96-116, 123-143, 145-165, 178-198, 199-219, 237-257, 274-294, and 324-344; these read MNPL…LITA, HWFL…PVLT, AAIK…MAIL, LMIL…FWVP, TLTS…SIMY, IFPV…IMVG, ILAY…PYNP, NITI…FLAL, LTWL…LPPL, GTLI…YFYM, and LLLP…PLTF.

The protein belongs to the complex I subunit 2 family. As to quaternary structure, core subunit of respiratory chain NADH dehydrogenase (Complex I) which is composed of 45 different subunits. Interacts with TMEM242.

The protein localises to the mitochondrion inner membrane. The catalysed reaction is a ubiquinone + NADH + 5 H(+)(in) = a ubiquinol + NAD(+) + 4 H(+)(out). In terms of biological role, core subunit of the mitochondrial membrane respiratory chain NADH dehydrogenase (Complex I) which catalyzes electron transfer from NADH through the respiratory chain, using ubiquinone as an electron acceptor. Essential for the catalytic activity and assembly of complex I. The sequence is that of NADH-ubiquinone oxidoreductase chain 2 from Symphalangus syndactylus (Siamang).